A 447-amino-acid polypeptide reads, in one-letter code: GTPase Der (447 aa).

EngA-type G domains are found at residues 4 to 165 and 180 to 357; these read QIIT…PEEE and LQIV…KIWN. GTP contacts are provided by residues 10 to 17, 57 to 61, 119 to 122, 186 to 193, 233 to 237, and 298 to 301; these read GRPNVGKS, DTPGL, NKCE, GRPNAGKS, DTAGL, and NKWD. The KH-like domain maps to 358–443; sequence KKITTSKLNE…PIRFIYVKTK (86 aa).

It belongs to the TRAFAC class TrmE-Era-EngA-EngB-Septin-like GTPase superfamily. EngA (Der) GTPase family. Associates with the 50S ribosomal subunit.

Its function is as follows. GTPase that plays an essential role in the late steps of ribosome biogenesis. The sequence is that of GTPase Der from Rickettsia conorii (strain ATCC VR-613 / Malish 7).